A 406-amino-acid chain; its full sequence is DNA primase DnaG (406 aa).

The Toprim domain occupies Pro-169–Ile-247. Mg(2+) contacts are provided by Glu-175, Asp-220, and Asp-222.

Belongs to the archaeal DnaG primase family. As to quaternary structure, forms a ternary complex with MCM helicase and DNA. Component of the archaeal exosome complex. Interacts with Csl4 but not with Rrp4. It depends on Mg(2+) as a cofactor.

The catalysed reaction is ssDNA + n NTP = ssDNA/pppN(pN)n-1 hybrid + (n-1) diphosphate.. RNA polymerase that catalyzes the synthesis of short RNA molecules used as primers for DNA polymerase during DNA replication. Can use NTPs but not dNTPs. Binds DNA. Also part of the exosome, which is a complex involved in RNA degradation. Acts as a poly(A)-binding protein that enhances the interaction between heteromeric, adenine-rich transcripts and the exosome. The sequence is that of DNA primase DnaG from Saccharolobus solfataricus (strain ATCC 35092 / DSM 1617 / JCM 11322 / P2) (Sulfolobus solfataricus).